The chain runs to 148 residues: uncharacterized protein (148 aa).

The 141-residue stretch at 8–148 (QVMQEPELKI…DGFLTLILRN (141 aa)) folds into the N-acetyltransferase domain.

It belongs to the acetyltransferase family.

This is an uncharacterized protein from Bacillus subtilis (strain 168).